The primary structure comprises 58 residues: Small ribosomal subunit protein bS21 (58 aa).

Residues Asp39 to Arg58 form a disordered region. A compositionally biased stretch (basic residues) spans Val43–Arg58.

It belongs to the bacterial ribosomal protein bS21 family.

This is Small ribosomal subunit protein bS21 from Chlamydia abortus (strain DSM 27085 / S26/3) (Chlamydophila abortus).